The following is a 405-amino-acid chain: Indoleamine 2,3-dioxygenase acdA (405 aa).

H312 is a binding site for heme.

Belongs to the indoleamine 2,3-dioxygenase family. Heme is required as a cofactor.

The enzyme catalyses L-tryptophan + O2 = N-formyl-L-kynurenine. It functions in the pathway secondary metabolite biosynthesis. Functionally, indoleamine 2,3-dioxygenase; part of the gene cluster that mediates the biosynthesis of aspcandine, a pyrrolobenzazepine alkaloid. Initially, the indoleamine 2,3-dioxygenase acdA accepts L-tryptophan and performs the oxidative opening of the indole ring to yield N'-formyl-L-kynurenine, which undergoes the spontaneous deformylation reaction to provide L-kynurenine. The kynurenine 3-monooxygenase acdD then hydroxylates L-kynurenine to afford 3-hydroxy-L-kynurenine. 3-hydroxy-L-kynurenine is activated by the A domain of the NRPS-PKS acdB and subsequently loaded onto the enzyme. The KS domain conducts the decarboxylative condensation of the 3-hydroxy-L-kynurenyl and malonyl moieties, and subsequent nucleophilic attacks by the two amino groups would occur nonenzymatically at two distinct positions, achieving the chain release and the construction of the tricyclic system. Finally, a dehydration reaction completes the biosynthesis to yield aspcandine. This is Indoleamine 2,3-dioxygenase acdA from Aspergillus candidus.